The sequence spans 1298 residues: DNA-directed RNA polymerase subunit beta' (1298 aa).

Zn(2+) contacts are provided by C60, C62, C75, and C78. Residues D535, D537, and D539 each contribute to the Mg(2+) site. 4 residues coordinate Zn(2+): C877, C954, C961, and C964.

It belongs to the RNA polymerase beta' chain family. In terms of assembly, the RNAP catalytic core consists of 2 alpha, 1 beta, 1 beta' and 1 omega subunit. When a sigma factor is associated with the core the holoenzyme is formed, which can initiate transcription. It depends on Mg(2+) as a cofactor. The cofactor is Zn(2+).

The catalysed reaction is RNA(n) + a ribonucleoside 5'-triphosphate = RNA(n+1) + diphosphate. Its function is as follows. DNA-dependent RNA polymerase catalyzes the transcription of DNA into RNA using the four ribonucleoside triphosphates as substrates. The chain is DNA-directed RNA polymerase subunit beta' from Micrococcus luteus (strain ATCC 4698 / DSM 20030 / JCM 1464 / CCM 169 / CCUG 5858 / IAM 1056 / NBRC 3333 / NCIMB 9278 / NCTC 2665 / VKM Ac-2230) (Micrococcus lysodeikticus).